The chain runs to 481 residues: MNILRRGRLGSNVKEDVMKFTTSLEFDKEIFESDILCDIAHTTMLIEQNVISEENGKKIIAELKKIAEKGMENLDLDPSLDDIHMVIESELIKELGEDVAGRMHTGRSRNDEVATDLRLSLRKKVLEIIGHLITMEQNMLKVSNEHKETLTVGYTHLQQAQPVTFGHHILSHVSAIERDISRFFDTYNRINISPLGCSAMATTGFNLNRKRTQELLGFYDIIENSMDGVSSRDFIVETMANISMLGTNLSKICEELVVFSSAEFNTIEIANEYTSTSSIMPQKKNPDVAEITRAKLSTLNGELVTVLTIMKALPNTYNRDLQEISPHLWKSVYTLIDCIQMVDGMISTIKVNKERMKENAEKNYSTATELADTLVRECGIAFRMAHGIVGELVKRSIEEKVEIKEIILEVLEKNNLSLSQEKIDTALDPFENVKLRNVIGGPAPEEVERAISSFNTKISTHKEKLDEKIAEVNTVNKNLLK.

The protein belongs to the lyase 1 family. Argininosuccinate lyase subfamily.

The protein resides in the cytoplasm. It catalyses the reaction 2-(N(omega)-L-arginino)succinate = fumarate + L-arginine. The protein operates within amino-acid biosynthesis; L-arginine biosynthesis; L-arginine from L-ornithine and carbamoyl phosphate: step 3/3. The polypeptide is Argininosuccinate lyase (Methanococcus maripaludis (strain C7 / ATCC BAA-1331)).